A 264-amino-acid chain; its full sequence is Apolipoprotein A-I (264 aa).

Positions 1 to 18 (MRGVLVTLAVLFLTGTQA) are cleaved as a signal peptide. 2 tandem repeats follow at residues 67 to 88 (LKLADNLDTLSAAAAKLREDMT) and 89 to 110 (PYYREVREMWLKDTEALRAELT). A 10 X approximate tandem repeats region spans residues 67-264 (LKLADNLDTL…LLDEVQKTMA (198 aa)). The stretch at 111 to 121 (KDLEEVKEKIR) is one 3; half-length repeat. 5 consecutive repeat copies span residues 122 to 143 (PFLDQFSAKWTEEVEQYRQRLA), 144 to 165 (PVAQELKDLTKQKVELMQAKLT), 166 to 187 (PVAEEVRDRLREQVEELRKNLA), 188 to 209 (PYSSELRQKLSQKLEEIRERGI), and 210 to 231 (PQASEYQAKVVEQLSNLREKMT). One copy of the 9; half-length repeat lies at 232–242 (PLVQEFKERLT). Repeat unit 10 spans residues 243 to 264 (PYAENLKNRLIDLLDEVQKTMA).

The protein belongs to the apolipoprotein A1/A4/E family. Major protein of VLDL, HDL, LDL and in chylomicrons. Expressed in a number of tissues including liver, small intestine, lung, kidney, heart and muscle with highest expression in liver and small intestine.

Its subcellular location is the secreted. In terms of biological role, participates in the reverse transport of cholesterol from tissues to the liver for excretion by promoting cholesterol efflux from tissues and by acting as a cofactor for the lecithin cholesterol acyltransferase (LCAT). The chain is Apolipoprotein A-I (APOA1) from Coturnix japonica (Japanese quail).